Consider the following 134-residue polypeptide: Small ribosomal subunit protein uS8c (134 aa).

Belongs to the universal ribosomal protein uS8 family. In terms of assembly, part of the 30S ribosomal subunit.

Its subcellular location is the plastid. The protein localises to the chloroplast. One of the primary rRNA binding proteins, it binds directly to 16S rRNA central domain where it helps coordinate assembly of the platform of the 30S subunit. This Gossypium barbadense (Sea Island cotton) protein is Small ribosomal subunit protein uS8c (rps8).